The primary structure comprises 804 residues: MNYNHNQIEKKWQDYWDENKTFKTNDNLGQKKFYALDMFPYPSGAGLHVGHPEGYTATDIISRYKRMQGYNVLHPMGWDAFGLPAEQYALDTGNDPREFTKKNIQTFKRQIKELGFSYDWDREVNTTDPEYYKWTQWIFIQLYNKGLAYVDEVAVNWCPALGTVLSNEEVIDGVSERGGHPVYRKPMKQWVLKITEYADQLLADLDDLDWPESLKDMQRNWIGRSEGAKVSFDVDNTEGKVEVFTTRPDTIYGASFLVLSPEHALVNSITTDEYKEKVKAYQTEASKKSDLERTDLAKDKSGVFTGAYAINPLSGEKVQIWIADYVLSTYGTGAIMAVPAHDDRDYEFAKKFDLPIIEVIEGGNVEEAAYTGEGKHINSGELDGLENEAAITKAIQLLEQKGAGEKKVNYKLRDWLFSRQRYWGEPIPVIHWEDGTMTTVPEEELPLLLPETDEIKPSGTGESPLANIDSFVNVVDEKTGMKGRRETNTMPQWAGSCWYYLRYIDPKNENMLADPEKLKHWLPVDLYIGGVEHAVLHLLYARFWHKVLYDLGIVPTKEPFQKLFNQGMILGEGNEKMSKSKGNVINPDDIVQSHGADTLRLYEMFMGPLDAAIAWSEKGLDGSRRFLDRVWRLMVNEDGTLSSKIVTTNNKSLDKVYNQTVKKVTEDFETLGFNTAISQLMVFINECYKVDEVYKPYIEGFVKMLAPIAPHIGEELWSKLGHEESITYQPWPTYDEALLVDDEVEIVVQVNGKLRAKIKIAKDTSKEEMQEIALSNDNVKASIEGKDIMKVIAVPQKLVNIVAK.

The 'HIGH' region signature appears at 40–51; it reads PYPSGAGLHVGH. A 'KMSKS' region motif is present at residues 576–580; the sequence is KMSKS. Lys579 provides a ligand contact to ATP.

This sequence belongs to the class-I aminoacyl-tRNA synthetase family.

The protein localises to the cytoplasm. It catalyses the reaction tRNA(Leu) + L-leucine + ATP = L-leucyl-tRNA(Leu) + AMP + diphosphate. This chain is Leucine--tRNA ligase, found in Staphylococcus aureus (strain Mu3 / ATCC 700698).